The sequence spans 369 residues: Anhydro-N-acetylmuramic acid kinase (369 aa).

12–19 (GTSLDGVD) contacts ATP.

It belongs to the anhydro-N-acetylmuramic acid kinase family.

The enzyme catalyses 1,6-anhydro-N-acetyl-beta-muramate + ATP + H2O = N-acetyl-D-muramate 6-phosphate + ADP + H(+). Its pathway is amino-sugar metabolism; 1,6-anhydro-N-acetylmuramate degradation. It participates in cell wall biogenesis; peptidoglycan recycling. Its function is as follows. Catalyzes the specific phosphorylation of 1,6-anhydro-N-acetylmuramic acid (anhMurNAc) with the simultaneous cleavage of the 1,6-anhydro ring, generating MurNAc-6-P. Is required for the utilization of anhMurNAc either imported from the medium or derived from its own cell wall murein, and thus plays a role in cell wall recycling. This is Anhydro-N-acetylmuramic acid kinase from Escherichia coli (strain SE11).